We begin with the raw amino-acid sequence, 499 residues long: Neuronal acetylcholine receptor subunit alpha-7 (499 aa).

Residues 1–19 (MRGSLCLALAASILHVSLQ) form the signal peptide. Over 20–230 (GEFQRKLYKD…VSIRRRTLYY (211 aa)) the chain is Extracellular. Ca(2+) is bound by residues Arg-39 and Val-41. N-linked (GlcNAc...) asparagine glycosylation is found at Asn-43, Asn-87, and Asn-130. A disulfide bridge links Cys-147 with Cys-161. Residues Ser-169 and Tyr-207 each contribute to the Ca(2+) site. A disulfide bridge connects residues Cys-209 and Cys-210. Transmembrane regions (helical) follow at residues 231–251 (GLNL…VFLL), 259–279 (ISLG…VAEI), and 292–312 (QYFA…VIVL). The essential for TMEM35A/NACHO-mediated proper subunit assembly and trafficking to cell membrane stretch occupies residues 257-264 (EKISLGIT). Topologically, residues 313-466 (QYHHHDPDGG…WKFAACVVDR (154 aa)) are cytoplasmic. Residues 467–487 (LCLMAFSVFTILCTIGILMSA) form a helical membrane-spanning segment.

This sequence belongs to the ligand-gated ion channel (TC 1.A.9) family. Acetylcholine receptor (TC 1.A.9.1) subfamily. Alpha-7/CHRNA7 sub-subfamily. Homopentamer. Homooligomer of the short form gives rise to unfunctional channels, as does coexpression of both long and short forms of the receptor. Can also form heteropentamers with CHRNB2, mainly found in basal forebrain cholinergic neurons. Interacts with RIC3; which is required for proper folding and assembly. Interacts with LYPD6. Interacts with CANX. In terms of processing, glycosylations at Asn-43, Asn-87 and Asn-130 are essential for TMEM35A/NACHO-mediated proper subunit assembly and trafficking to the cell membrane. As to expression, at least in chromaffin cells.

It localises to the postsynaptic cell membrane. It is found in the cell membrane. The catalysed reaction is Ca(2+)(in) = Ca(2+)(out). The enzyme catalyses K(+)(in) = K(+)(out). It catalyses the reaction Na(+)(in) = Na(+)(out). It carries out the reaction choline(out) = choline(in). The catalysed reaction is NH4(+)(in) = NH4(+)(out). The enzyme catalyses L-arginine(in) = L-arginine(out). It catalyses the reaction guanidine(out) = guanidine(in). Its activity is regulated as follows. Activated by a myriad of ligands such as acetylcholine, cytisine, nicotine, choline and epibatidine. Oligomeric amyloid-beta protein 42 activates specifially CHRNA7:CHRNB2 nAchRs. Activity is modulated by positive allosteric modulators (PAMs), such as flavonoids, with a wide range of chemical diversity, pharmacological sensitivity and efficacy. AChR activity is inhibited by the antagonists alpha-conotoxons RgIA, ImI and ImII, small disulfide-constrained peptides from cone snails. Alpha-conotoxin PnIC selectively inhibits CHRNA7:CHRNB2 over CHRNA7 homopentamer. Its function is as follows. Component of neuronal acetylcholine receptors (nAChRs) that function as pentameric, ligand-gated cation channels with high calcium permeability among other activities. nAChRs are excitatory neurotrasnmitter receptors formed by a collection of nAChR subunits known to mediate synaptic transmission in the nervous system and the neuromuscular junction. Each nAchR subunit confers differential attributes to channel properties, including activation, deactivation and desensitization kinetics, pH sensitivity, cation permeability, and binding to allosteric modulators. CHRNA7 forms homopentameric neuronal acetylcholine receptors abundantly expressed in the central nervous system, characterized by fast desensitization and high calcium permeability. Also forms heteropentamers with CHRNB2, mainly expressed in basal forebrain cholinergic neurons. Involved in the modulation of calcium-dependent signaling pathways and influences the release of neurotransmitters, including dopamine, glutamate and GABA. Also expressed in non-neuronal cells such as immune cells like lymphocytes, monocytes and macrophages. In T cells, activation induces metabotropic signaling that results in an increase of intracellular Ca2+ concentrations, independent of ionotropic receptor functions. In macrophages, required for acetylcholine-mediated inhibition of TNF and other inflammatory cytokine release. Once activated by acetylcholine, nicotine or other agonists, selectively inhibits production of pro-inflammatory cytokines while leaving anti-inflammatory cytokines undisturbed. Stimulates the cholinergic anti-inflammatory pathway, controlling inflammation by inhibiting NFKB nuclear translocation and activating the JAK2-STAT3 pathway, independently of ion channel activity. Also expressed in the urothelium where it modulates reflex bladder activity by increasing intracellular calcium through internal stores and decreasing basal ATP release. This is Neuronal acetylcholine receptor subunit alpha-7 (CHRNA7) from Bos taurus (Bovine).